The primary structure comprises 270 residues: Outer membrane protein P.IIC (270 aa).

The N-terminal stretch at 1 to 25 (MQPAKNLLFSSLLFSSLLFSSAARA) is a signal peptide. Topologically, residues 26 to 35 (ASEDGGRGPY) are extracellular. A beta stranded membrane pass occupies residues 36 to 44 (VQADLAYAA). Residues 45–76 (ERITHDYPKPTGTGKNKISTVSDYFRNIRTHS) are Periplasmic-facing. The chain crosses the membrane as a beta stranded span at residues 77 to 85 (VHPRVSVGY). Over 86 to 89 (DFGS) the chain is Extracellular. The beta stranded transmembrane segment at 90–96 (WRIAADY) threads the bilayer. Residues 97–142 (ARYRKWNNNKYSVSIKELLRNDNSASGVRGHLNIQTQKTEHQENGT) are Periplasmic-facing. A beta stranded transmembrane segment spans residues 143-157 (FHAVSSLGLSTIYDF). Topologically, residues 158-162 (DTGSR) are extracellular. A beta stranded membrane pass occupies residues 163–173 (FKPYIGMRVAY). At 174-221 (GHVRHQVRSVEQETEIITTYPSNGGGKVSLSSKMPPKSAHHQSNSIRR) the chain is on the periplasmic side. The segment at 194–217 (PSNGGGKVSLSSKMPPKSAHHQSN) is disordered. Residues 222–234 (VGLGVIAGVGFDI) form a beta stranded membrane-spanning segment. The Extracellular segment spans residues 235-237 (TPN). The beta stranded transmembrane segment at 238–246 (LTLDTGYRY) threads the bilayer. The Periplasmic portion of the chain corresponds to 247 to 261 (HNWGRLENTRFKTHE). The chain crosses the membrane as a beta stranded span at residues 262-270 (ASLGMRYRF).

Belongs to the opacity porin family. As to quaternary structure, homotrimer.

The protein resides in the cell outer membrane. Functionally, this protein serves as a porin. The sequence is that of Outer membrane protein P.IIC (piiC) from Neisseria gonorrhoeae.